A 422-amino-acid chain; its full sequence is Replication factor C large subunit (422 aa).

Position 63–70 (63–70 (GPPGVGKT)) interacts with ATP.

The protein belongs to the activator 1 small subunits family. RfcL subfamily. In terms of assembly, heteromultimer composed of small subunits (RfcS) and large subunits (RfcL).

Part of the RFC clamp loader complex which loads the PCNA sliding clamp onto DNA. The protein is Replication factor C large subunit of Pyrobaculum aerophilum (strain ATCC 51768 / DSM 7523 / JCM 9630 / CIP 104966 / NBRC 100827 / IM2).